An 835-amino-acid chain; its full sequence is Neuroligin-2 (835 aa).

A signal peptide spans 1–14 (MWLLALCLVGLAGA). Over 15–677 (QRGGGGPGGG…DSRDYSTELS (663 aa)) the chain is Extracellular. N-linked (GlcNAc...) asparagine glycosylation is found at N98 and N136. Disulfide bonds link C106-C141, C317-C328, and C487-C521. N522 is a glycosylation site (N-linked (GlcNAc...) asparagine). The disordered stretch occupies residues 623-668 (PPYATRWPPRPPAGAPGTRRPPPPATLPPEPEPEPGPRAYDRFPGD). Over residues 630–658 (PPRPPAGAPGTRRPPPPATLPPEPEPEPG) the composition is skewed to pro residues. Residues 678–698 (VTVAVGASLLFLNILAFAALY) traverse the membrane as a helical segment. The segment at 678–698 (VTVAVGASLLFLNILAFAALY) is required for interaction with LHFPL4. Residues 699 to 835 (YKRDRRQELR…LPHPHSTTRV (137 aa)) are Cytoplasmic-facing. Phosphoserine is present on residues S713 and S718. Residues 790–835 (LLPSGLGPPPPPPPPSLHPFGPFPPPPPTATSHNNTLPHPHSTTRV) are disordered. Pro residues predominate over residues 795 to 818 (LGPPPPPPPPSLHPFGPFPPPPPT). Polar residues predominate over residues 823 to 835 (NNTLPHPHSTTRV).

This sequence belongs to the type-B carboxylesterase/lipase family. Interacts with neurexins NRXN1, NRXN2 and NRXN3. Interaction with neurexins is mediated by heparan sulfate glycan modification on neurexin. Interacts (via its C-terminus) with DLG4/PSD-95 (via PDZ domain 3). Interacts with PATJ. Interacts with GPHN. Interacts with MDGA1 and MDGA2. Found in a complex with MAGI2 and IGSF9B, where it interacts with MAGI2 (via WW 1, WW 2 and PDZ 2 domains). Identified in a complex of 720 kDa composed of LHFPL4, NLGN2, GABRA1, GABRB2, GABRG2 and GABRB3. Interacts with LHFPL4; leading to mutual regulation of the protein level and synaptic clustering. Interacts with NLGN2. In terms of tissue distribution, expressed in the blood vessel walls. Detected in colon, brain and pancreas islets of Langerhans (at protein level). Detected in brain, and at lower levels in pancreas islet beta cells.

It localises to the cell membrane. The protein localises to the postsynaptic cell membrane. The protein resides in the presynaptic cell membrane. Its function is as follows. Transmembrane scaffolding protein involved in cell-cell interactions via its interactions with neurexin family members. Mediates cell-cell interactions both in neurons and in other types of cells, such as Langerhans beta cells. Plays a role in synapse function and synaptic signal transmission, especially via gamma-aminobutyric acid receptors (GABA(A) receptors). Functions by recruiting and clustering synaptic proteins. Promotes clustering of postsynaptic GABRG2 and GPHN. Promotes clustering of postsynaptic LHFPL4. Modulates signaling by inhibitory synapses, and thereby plays a role in controlling the ratio of signaling by excitatory and inhibitory synapses and information processing. Required for normal signal amplitude from inhibitory synapses, but is not essential for normal signal frequency. May promote the initial formation of synapses, but is not essential for this. In vitro, triggers the de novo formation of presynaptic structures. Mediates cell-cell interactions between Langerhans beta cells and modulates insulin secretion. In Homo sapiens (Human), this protein is Neuroligin-2 (NLGN2).